The sequence spans 428 residues: Tubby-like F-box protein 5 (428 aa).

The disordered stretch occupies residues Ile17–Gln65. Residues Gln47–Gln65 show a composition bias toward low complexity. One can recognise an F-box domain in the interval Gln65 to Leu117.

Belongs to the TUB family. In terms of tissue distribution, ubiquitous.

The chain is Tubby-like F-box protein 5 (TULP5) from Oryza sativa subsp. japonica (Rice).